Here is a 193-residue protein sequence, read N- to C-terminus: Probable gluconokinase (193 aa).

21–28 (GPAGSGKT) is an ATP binding site.

It belongs to the gluconokinase GntK/GntV family.

It catalyses the reaction D-gluconate + ATP = 6-phospho-D-gluconate + ADP + H(+). Its pathway is carbohydrate acid metabolism; D-gluconate degradation. In Schizosaccharomyces pombe (strain 972 / ATCC 24843) (Fission yeast), this protein is Probable gluconokinase.